The sequence spans 125 residues: Large ribosomal subunit protein bL12 (125 aa).

This sequence belongs to the bacterial ribosomal protein bL12 family. Homodimer. Part of the ribosomal stalk of the 50S ribosomal subunit. Forms a multimeric L10(L12)X complex, where L10 forms an elongated spine to which 2 to 4 L12 dimers bind in a sequential fashion. Binds GTP-bound translation factors.

Forms part of the ribosomal stalk which helps the ribosome interact with GTP-bound translation factors. Is thus essential for accurate translation. This Campylobacter curvus (strain 525.92) protein is Large ribosomal subunit protein bL12.